The chain runs to 347 residues: NADH-ubiquinone oxidoreductase chain 2 (347 aa).

11 consecutive transmembrane segments (helical) span residues 3-23 (PMTS…VLMS), 25-45 (HWFM…PILM), 59-79 (YFLT…INLM), 96-116 (TLIT…FWVP), 122-142 (VSLS…LSLL), 149-169 (INTN…GWGG), 178-198 (IMAY…IYNP), 200-220 (LSLL…MLLI), 240-260 (ITTM…LTGF), 274-294 (NSVI…FFYM), and 326-346 (MTML…FISL).

It belongs to the complex I subunit 2 family. Core subunit of respiratory chain NADH dehydrogenase (Complex I) which is composed of 45 different subunits. Interacts with TMEM242.

The protein localises to the mitochondrion inner membrane. It catalyses the reaction a ubiquinone + NADH + 5 H(+)(in) = a ubiquinol + NAD(+) + 4 H(+)(out). Its function is as follows. Core subunit of the mitochondrial membrane respiratory chain NADH dehydrogenase (Complex I) which catalyzes electron transfer from NADH through the respiratory chain, using ubiquinone as an electron acceptor. Essential for the catalytic activity and assembly of complex I. This chain is NADH-ubiquinone oxidoreductase chain 2, found in Sylvisorex granti (Grant's forest shrew).